A 232-amino-acid polypeptide reads, in one-letter code: Ubiquinone biosynthesis O-methyltransferase (232 aa).

The S-adenosyl-L-methionine site is built by R36, G55, D76, and M120.

It belongs to the methyltransferase superfamily. UbiG/COQ3 family.

The enzyme catalyses a 3-demethylubiquinol + S-adenosyl-L-methionine = a ubiquinol + S-adenosyl-L-homocysteine + H(+). The catalysed reaction is a 3-(all-trans-polyprenyl)benzene-1,2-diol + S-adenosyl-L-methionine = a 2-methoxy-6-(all-trans-polyprenyl)phenol + S-adenosyl-L-homocysteine + H(+). Its pathway is cofactor biosynthesis; ubiquinone biosynthesis. O-methyltransferase that catalyzes the 2 O-methylation steps in the ubiquinone biosynthetic pathway. The protein is Ubiquinone biosynthesis O-methyltransferase of Chromobacterium violaceum (strain ATCC 12472 / DSM 30191 / JCM 1249 / CCUG 213 / NBRC 12614 / NCIMB 9131 / NCTC 9757 / MK).